The chain runs to 842 residues: Ionotropic receptor 21a (842 aa).

An N-terminal signal peptide occupies residues 1 to 15 (MSYYWVALVLFTAQA). A glycan (N-linked (GlcNAc...) asparagine) is linked at Asn325. 2 helical membrane passes run 405-425 (WPVW…IVFT) and 437-457 (WGEV…AFSF). Asn469 carries an N-linked (GlcNAc...) asparagine glycan. A helical membrane pass occupies residues 479–499 (WLFTIIITSCYTGSIIAFVTL). N-linked (GlcNAc...) asparagine glycans are attached at residues Asn533, Asn558, Asn583, and Asn588. Residues 680–700 (MFLLMALGYFLGATALVSEIV) form a helical membrane-spanning segment. A disordered region spans residues 722–745 (WSSASSGSMLRTNAEQLSHDKRKA). N-linked (GlcNAc...) asparagine glycosylation is found at Asn765 and Asn797.

The protein belongs to the glutamate-gated ion channel (TC 1.A.10.1) family. Expressed in the dorsal organ cool cells. In the antenna, expressed in approximately six neurons in the arista as well as five to ten neurons near the third chamber of the sacculus.

Its subcellular location is the cell membrane. Integral part of a neural sensory system in the antenna that provides the neural basis for the response to environmental changes in temperature (thermosensation). Together with Ir25a and Ir93a, mediates the response of the dorsal organ cool cells, a trio of cool-responsive neurons, to cooling and is required for cool avoidance behavior. In Drosophila melanogaster (Fruit fly), this protein is Ionotropic receptor 21a.